Reading from the N-terminus, the 737-residue chain is MAGLSFADSASLHEGRPLLLPSSFRESVTFKDVVVNFTQEEWKHLDPIQRDLFRDVTLENYTHLVSIGLQVSKPDMISQLEQGTEPWTEDSCIPVGPLEDWKKRAGNSVSSLELDISEEHLFSETVVTNSKRDDGSLEKLQANQQMLPREVQITEKTAPTCESNLSVSSSFITQTEVALDQPSTKTRAKQNSHPVKKEKLCKCNECGKAFTYCSALIRHQRTHTGEKPYKCNECNKAFSRSENLINHQRIHTGDKPYKCDQCGKGFIEGPSLTQHQRIHTGEKPYKCDECGKAFSQRTHLVQHQRIHTGEKPYTCTECGKSFSQRGHFMEHQKIHTGEKPFKCEECEKTFTRSTHLTQHQKIHTGEKTYKCNECGKAFNGPSTFIRHHMIHTGEKPYECNECGKAFSQHSNLTQHQKTHTGEKPYDCAECGKAFSYWSSLAQHLKIHTGEKPYKCSDCGKAFSYCSSLTQHRRIHTREKPFECSECGKAFSYLSNLNQHQKTHTQEKAYECKECGKAFIRSSSLAKHERIHTGEKPYQCHECGKTFSYGSSLIQHKKIHTGERPYKCNECGRAFNQKIHLTQHKRIHTGAKPYACPKCGKTFRHCSSLAQHQKTHTEEKPYQCNKCEKTFSQNSRLTQHQRIHTGEKPYKCSECDKCFTGSVHLTEHRSTHTGEKPYNSECPQTFSQSTYLTQHQKIHSGEKLLGCEDCEKAFQCHSALTKHQRLHPAVAAVGTSLT.

In terms of domain architecture, KRAB spans 28 to 99 (VTFKDVVVNF…DSCIPVGPLE (72 aa)). Ser117 carries the phosphoserine modification. Residue Lys185 forms a Glycyl lysine isopeptide (Lys-Gly) (interchain with G-Cter in SUMO2) linkage. C2H2-type zinc fingers lie at residues 201–223 (CKCN…QRTH), 229–251 (YKCN…QRIH), 257–279 (YKCD…QRIH), 285–307 (YKCD…QRIH), 313–335 (YTCT…QKIH), 341–363 (FKCE…QKIH), 369–391 (YKCN…HMIH), 397–419 (YECN…QKTH), 425–447 (YDCA…LKIH), 453–475 (YKCS…RRIH), 481–503 (FECS…QKTH), 509–531 (YECK…ERIH), 537–559 (YQCH…KKIH), 565–587 (YKCN…KRIH), 593–615 (YACP…QKTH), 621–643 (YQCN…QRIH), and 649–671 (YKCS…RSTH). The C2H2-type 18; degenerate zinc-finger motif lies at 677–698 (YNSECPQTFSQSTYLTQHQKIH). The C2H2-type 19 zinc-finger motif lies at 704–726 (LGCEDCEKAFQCHSALTKHQRLH).

Belongs to the krueppel C2H2-type zinc-finger protein family.

It localises to the nucleus. In terms of biological role, may be involved in transcriptional regulation. In Mus musculus (Mouse), this protein is Zinc finger protein 184 (Zfp184).